The sequence spans 337 residues: MSLKLGVIGAGAIGKEHIRRCTQVLQGATVVAVSDINADNARAAVALPGVQAEVYADGHDVINASDVDAILVTSWDPTHEEYTLAAIAAGKPVFCEKPLAMSAEGCRRIVDAEMKAGRRLVQVGFMRPYDEGYLALKKVIDDGDIGAPLMLRCAHRNQSVGENYTTDMAITNTLIHELDVLRWLLNDDYRSVQVRFPRSTSHTHARLKDPQIVSFETKKGTLIDVEVFVNCQYGYDIQCEVVGETGIARLPEPSAVQMRKSASLSTAILTDWKDRFIKAYDVELQAFINDVKAGQLHGPSAWDGYAASVAADACIKAQGTSEPVEVTLPECPAFYKR.

The protein belongs to the Gfo/Idh/MocA family. In terms of assembly, homotetramer.

It carries out the reaction myo-inositol + NAD(+) = scyllo-inosose + NADH + H(+). Involved in the oxidation of myo-inositol (MI) to 2-keto-myo-inositol (2KMI or 2-inosose). This chain is Inositol 2-dehydrogenase, found in Klebsiella pneumoniae (strain 342).